A 1153-amino-acid polypeptide reads, in one-letter code: Bifunctional dioxygenase (DOX)-epoxy alcohol synthase (EAS) (1153 aa).

Positions 46-56 (SSKESPSRKSS) are enriched in low complexity. Positions 46-113 (SSKESPSRKS…TQHGDGTYPT (68 aa)) are disordered. Residues 57–74 (TIGQSTRNGSCQADTQKG) show a composition bias toward polar residues. Basic and acidic residues predominate over residues 81-98 (EKPKPVKENPMKKLKEMS). Residues 177–525 (TDSLINELWE…DGKFDDDDLV (349 aa)) form a fatty acid alpha-dioxygenase region. Histidine 276 is a binding site for heme b. Tyrosine 454 is an active-site residue. Histidine 457 serves as a coordination point for heme b. The interval 732 to 1153 (RVNITSYGGA…VTMRVMWDDE (422 aa)) is epoxy alcohol synthase. Position 1086 (cysteine 1086) interacts with heme.

The protein in the N-terminal section; belongs to the peroxidase family. It in the C-terminal section; belongs to the cytochrome P450 family. As to quaternary structure, homotetramer. Heme b serves as cofactor. Heme is required as a cofactor.

It catalyses the reaction (9Z)-octadecenoate + O2 = (8R)-hydroperoxy-(9Z)-octadecenoate. The catalysed reaction is (9Z)-octadecenoate + O2 = 10-hydroperoxy-(8E)-octadecenoate. It carries out the reaction (9Z,12Z)-octadecadienoate + O2 = (8E,10R,12Z)-10-hydroperoxyoctadeca-8,12-dienoate. The enzyme catalyses (9Z,12Z,15Z)-octadecatrienoate + O2 = (10R)-hydroperoxy-(8E,12Z,15Z)-octadecatrienoate. It catalyses the reaction (9Z,12Z,15Z)-octadecatrienoate + O2 = (8R)-hydroperoxy-(9Z,12Z,15Z)-octadecatrienoate. The catalysed reaction is (11Z,14Z)-eicosadienoate + O2 = 12-hydroperoxy-(10E,14Z)-eicosadienoate. It carries out the reaction (11Z,14Z,17Z)-eicosatrienoate + O2 = 12-hydroperoxy-(10E,14Z,17Z)-eicosatrienoate. The enzyme catalyses (12R,13S)-epoxy-(9Z)-octadecenoate + O2 = (12R,13S)-epoxy-(10R)-hydroperoxy-(8E)-octadecenoate. It catalyses the reaction (8E,10R,12Z)-10-hydroperoxyoctadeca-8,12-dienoate = (12S,13R)-epoxy-(10R)-hydroxy-(8E)-octadecenoate. The catalysed reaction is (10R)-hydroperoxy-(8E,12Z,15Z)-octadecatrienoate = 12,13-epoxy-(10R)-hydroxy-(8E,15Z)-octadecadienoate. It carries out the reaction 12-hydroperoxy-(10E,14Z)-eicosadienoate = 10,11-epoxy-12-hydroxy-(14Z)-eicosenoate. The enzyme catalyses 12-hydroperoxy-(10E,14Z,17Z)-eicosatrienoate = 14,15-epoxy-12-hydroxy-(10E,17Z)-eicosadienoate. It catalyses the reaction (13R)-hydroperoxy-(9Z,11E)-octadecadienoate = (12R,13R)-epoxy-(11S)-hydroxy-(9Z)-octadecenoate. The catalysed reaction is (13S)-hydroperoxy-(9Z,11E)-octadecadienoate = (12R,13R)-epoxy-(11S)-hydroxy-(9Z)-octadecenoate. It carries out the reaction 12-hydroperoxy-(10E,14Z)-eicosadienoate = 14,15-epoxy-12-hydroxy-(10E)-eicosenoate. The enzyme catalyses 12-hydroperoxy-(10E,14Z,17Z)-eicosatrienoate = 10,11-epoxy-12-hydroxy-(14Z,17Z)-eicosadienoate. In terms of biological role, bifunctional dioxygenase (DOX)-epoxy alcohol synthase (EAS) that converts linoleic acid (18:2n-6) sequentially to 10(R)-hydroperoxy-8(E),12(Z)-octadecadienoic acid (10R-HPODE) and 10R-HPODE further to 12 S(13R)-epoxy-10(R)-hydroxy-8(E)-octadecenoic acid as the end product. Oxygenation at C-10 occurs by retention of the pro-R hydrogen of C-8 of 18:2n-6, suggesting antarafacial hydrogen abstraction and oxygenation. The epoxy alcohol is formed from 10R-HPODE, likely by heterolytic cleavage of the dioxygen bond and subsequent intramolecular epoxidation of the 12(Z) double bond. The DOX domain is also able to oxygenate position C-8 of linoleic acid to produce 8(R)-hydroperoxy-8(E),12(Z)-octadecadienoic acid (8R-HPODE). Moreover, the DOX domain can oxygenate alpha-linolenic acid (18:3n-3) at C-8 or C-10 to produce respectively 8HOTrE and 10HOTrE, oleic acid (18:1n-9) at C-8 or C-10 to produce respectively 8-H(P)OME and 10-H(P)OME (with 8R stereoisomer to over 95%), eicosadienoic acid (20:2n-6) at C-10 or C-12 to produce respectively 10(11)-epoxy-12-hydroxy-14(Z)-eicosenoic acid and 14(15)-epoxy-12-hydroxy-10(E)-eicosenoic acid, as well as eicosatrienoic acid (20:3n-3) at C-10 or C-12 to produce respectively 10(11)-epoxy-12-hydroxy-14(Z),17(Z)-eicosadienoic acid and 14(15)-epoxy-12-hydroxy-14(Z),17(Z)-eicosadienoic acid. On the other side, the enzyme EAS domain can also catalyze the conversion of 10HOTrE into 12(13)-epoxy-10(R)-hydroxy-8(E),15(Z)-octadecadienoic acid, 13-R-HPODE into the stereoisomers of 12(13)-epoxy-11-hydroxy-9(Z)-octadecenoic acids (erythro/threo, 1:4), as well as 13S-HPODE into the stereoisomers of 12(13)-epoxy-11-hydroxy-9(Z)-octadecenoic acids (erythro/threo, 1:4) (EAS activity). Gamma-linolenic acid (18:3n-6) is not a substrate. This is Bifunctional dioxygenase (DOX)-epoxy alcohol synthase (EAS) from Pyricularia oryzae (strain 70-15 / ATCC MYA-4617 / FGSC 8958) (Rice blast fungus).